A 148-amino-acid polypeptide reads, in one-letter code: Protein Smg homolog (148 aa).

The protein belongs to the Smg family.

The polypeptide is Protein Smg homolog (Thiobacillus denitrificans (strain ATCC 25259 / T1)).